A 251-amino-acid polypeptide reads, in one-letter code: tRNA pseudouridine synthase A (251 aa).

Aspartate 26 (nucleophile) is an active-site residue. Position 98 (tyrosine 98) interacts with substrate.

It belongs to the tRNA pseudouridine synthase TruA family. As to quaternary structure, homodimer.

It catalyses the reaction uridine(38/39/40) in tRNA = pseudouridine(38/39/40) in tRNA. In terms of biological role, formation of pseudouridine at positions 38, 39 and 40 in the anticodon stem and loop of transfer RNAs. This is tRNA pseudouridine synthase A from Mycolicibacterium paratuberculosis (strain ATCC BAA-968 / K-10) (Mycobacterium paratuberculosis).